A 180-amino-acid chain; its full sequence is Ribulose bisphosphate carboxylase small subunit, chloroplastic 1 (180 aa).

A chloroplast-targeting transit peptide spans 1-56 (MASSVLSSAAVATRSNVAQANMVAPFTGLKSAASFPVSRKQNLDITSIASNGGRVQ).

This sequence belongs to the RuBisCO small chain family. Heterohexadecamer of 8 large and 8 small subunits.

The protein localises to the plastid. It localises to the chloroplast. Functionally, ruBisCO catalyzes two reactions: the carboxylation of D-ribulose 1,5-bisphosphate, the primary event in carbon dioxide fixation, as well as the oxidative fragmentation of the pentose substrate. Both reactions occur simultaneously and in competition at the same active site. Although the small subunit is not catalytic it is essential for maximal activity. The polypeptide is Ribulose bisphosphate carboxylase small subunit, chloroplastic 1 (Nicotiana sylvestris (Wood tobacco)).